The following is a 96-amino-acid chain: Co-chaperonin GroES (96 aa).

This sequence belongs to the GroES chaperonin family. Heptamer of 7 subunits arranged in a ring. Interacts with the chaperonin GroEL.

Its subcellular location is the cytoplasm. Its function is as follows. Together with the chaperonin GroEL, plays an essential role in assisting protein folding. The GroEL-GroES system forms a nano-cage that allows encapsulation of the non-native substrate proteins and provides a physical environment optimized to promote and accelerate protein folding. GroES binds to the apical surface of the GroEL ring, thereby capping the opening of the GroEL channel. The polypeptide is Co-chaperonin GroES (Aggregatibacter actinomycetemcomitans (Actinobacillus actinomycetemcomitans)).